A 92-amino-acid polypeptide reads, in one-letter code: DNA-directed RNA polymerase subunit Rpo5 (92 aa).

It belongs to the archaeal Rpo5/eukaryotic RPB5 RNA polymerase subunit family. In terms of assembly, part of the RNA polymerase complex.

The protein localises to the cytoplasm. The enzyme catalyses RNA(n) + a ribonucleoside 5'-triphosphate = RNA(n+1) + diphosphate. DNA-dependent RNA polymerase (RNAP) catalyzes the transcription of DNA into RNA using the four ribonucleoside triphosphates as substrates. The protein is DNA-directed RNA polymerase subunit Rpo5 of Methanopyrus kandleri (strain AV19 / DSM 6324 / JCM 9639 / NBRC 100938).